A 181-amino-acid chain; its full sequence is UPF0302 protein ABC1905 (181 aa).

This sequence belongs to the UPF0302 family.

This Shouchella clausii (strain KSM-K16) (Alkalihalobacillus clausii) protein is UPF0302 protein ABC1905.